The chain runs to 326 residues: Protein ORF5 in retron Ec67 (326 aa).

The disordered stretch occupies residues 1 to 24 (MGKSKKNRAAATNQLKHKSQTSAE). Residues 10 to 24 (AATNQLKHKSQTSAE) show a composition bias toward polar residues.

It belongs to the phage portal family. PBSX subfamily.

The chain is Protein ORF5 in retron Ec67 from Escherichia coli.